The chain runs to 754 residues: Glutathione biosynthesis bifunctional protein GshAB (754 aa).

The interval 1–332 (MTLNQLLQKL…QGHALNEKIA (332 aa)) is glutamate--cysteine ligase. One can recognise an ATP-grasp domain in the interval 488–746 (KKILADASFP…ITTKILDKLF (259 aa)). 515-573 (PLIKDKQIVVKPKSTNFGLGISIFQEPASLDNYQKALEIAFAEDTSVLVEEFIPGTEYR) is an ATP binding site. Residues Asp-695, Glu-716, and Asn-718 each coordinate Mg(2+). Mn(2+) is bound by residues Asp-695, Glu-716, and Asn-718.

In the N-terminal section; belongs to the glutamate--cysteine ligase type 1 family. Type 2 subfamily. In terms of assembly, monomer. Mg(2+) is required as a cofactor. It depends on Mn(2+) as a cofactor.

It catalyses the reaction L-cysteine + L-glutamate + ATP = gamma-L-glutamyl-L-cysteine + ADP + phosphate + H(+). The enzyme catalyses gamma-L-glutamyl-L-cysteine + glycine + ATP = glutathione + ADP + phosphate + H(+). Its pathway is sulfur metabolism; glutathione biosynthesis; glutathione from L-cysteine and L-glutamate: step 1/2. The protein operates within sulfur metabolism; glutathione biosynthesis; glutathione from L-cysteine and L-glutamate: step 2/2. Its function is as follows. Synthesizes glutathione from L-glutamate and L-cysteine via gamma-L-glutamyl-L-cysteine. The protein is Glutathione biosynthesis bifunctional protein GshAB of Streptococcus thermophilus (strain ATCC BAA-250 / LMG 18311).